Consider the following 399-residue polypeptide: Interferon regulatory factor 9 (399 aa).

The segment at residues 9-116 (TRKLRSWIVE…EPYKVYRILP (108 aa)) is a DNA-binding region (IRF tryptophan pentad repeat). Residues 118 to 189 (GTLPNQPRNQ…CNSELEEGAG (72 aa)) are disordered. Positions 120 to 129 (LPNQPRNQKS) are enriched in polar residues. Residue serine 139 is modified to Phosphoserine. Over residues 148-157 (NGRTNGVVNH) the composition is skewed to polar residues. Low complexity predominate over residues 171–189 (SNRSDSNSNCNSELEEGAG). Serine 393 carries the phosphoserine modification.

Belongs to the IRF family. As to quaternary structure, interacts with STAT2 in the cytoplasm. Forms the interferon-stimulated gene factor 3 complex (ISGF3) with the heterodimer STAT1:STAT2; upon stimulation.

Its subcellular location is the nucleus. Functionally, transcription factor that plays an essential role in anti-viral immunity. It mediates signaling by type I IFNs (IFN-alpha and IFN-beta). Following type I IFN binding to cell surface receptors, Jak kinases (TYK2 and JAK1) are activated, leading to tyrosine phosphorylation of STAT1 and STAT2. IRF9/ISGF3G associates with the phosphorylated STAT1:STAT2 dimer to form a complex termed ISGF3 transcription factor, that enters the nucleus. ISGF3 binds to the IFN stimulated response element (ISRE) to activate the transcription of interferon stimulated genes, which drive the cell in an antiviral state. The sequence is that of Interferon regulatory factor 9 (Irf9) from Mus musculus (Mouse).